The sequence spans 508 residues: uncharacterized protein (508 aa).

The protein localises to the virion. This is an uncharacterized protein from Acanthamoeba polyphaga mimivirus (APMV).